We begin with the raw amino-acid sequence, 468 residues long: MSLISAGRVCARILGAKNSPCALIAARQASSSTNLKDVLSDLIPKEQTRIKNFKQQHGKTVIGQVTVDMVYGGMRGMKGLVYETSVLDPDEGIRFRGYSIPECQKLLPKAPGGEEPLPEGLFWLLVTGEVPNQDQVNWISKEWAKRAALPSHVVTMLDNFPTNLHPMSQLSAAITALNSESNFARAYAEGVNKAKYWELVYEDSMDLIAKLPCVAAKIYRNLYREGSSIGAIDSNLDWSDNFTNMLGYTDQQFTELMRLYLTIHSDHEGGNVSAHTSHLVGSALSDPYLSFSAAMNGLAGPLHGLANQEVLVWLTSLQKDLGGEVSDEKLRDYIWNTLNSGRVVPGYGHAVLRKTDPRYTCQREFALKHLPDDPMFKLVAQLYKIVPNILLEQGKAKNPWPNVDAHSGVLLQYYGMTEMNYYTVLFGVSRALGVLSQLIWSRALGFPLERPKSMSTDGLMQLVGSKSG.

The N-terminal 30 residues, 1-30 (MSLISAGRVCARILGAKNSPCALIAARQAS), are a transit peptide targeting the mitochondrion. Residues His303 and His349 contribute to the active site. Arg358 serves as a coordination point for oxaloacetate. The active site involves Asp404. Oxaloacetate contacts are provided by Arg430 and Arg450.

It belongs to the citrate synthase family. As to quaternary structure, homodimer.

The protein localises to the mitochondrion matrix. It carries out the reaction oxaloacetate + acetyl-CoA + H2O = citrate + CoA + H(+). The protein operates within carbohydrate metabolism; tricarboxylic acid cycle; isocitrate from oxaloacetate: step 1/2. Functionally, key enzyme of the Krebs tricarboxylic acid cycle which catalyzes the synthesis of citrate from acetyl coenzyme A and oxaloacetate. In Xenopus laevis (African clawed frog), this protein is Citrate synthase, mitochondrial (cs).